A 250-amino-acid polypeptide reads, in one-letter code: MRAKIVAGNWKMNKNSEETEDLINELIDKLPTNSNAKIIIAPTFINLASAVDHTEFTNIRVAAQNMHQAENGAYTGEISADMLKSIGVNTVILGHSERRAIFHETDAIISFKVDTALRHEMTVIFCFGEELKDRQNKQHFNIVENQLRDGLFHIDKSAWANIILAYEPVWAIGTGETASPEQAQEMHEFIRETVRKVFGSDIAEDVSILYGGSVKPDNAKEIFSKPDVDGGLIGGAALKADDFVVIVNGI.

Residue Asn9–Lys11 coordinates substrate. The Electrophile role is filled by His95. The active-site Proton acceptor is Glu167. Substrate contacts are provided by residues Gly173, Ser213, and Gly234–Gly235.

The protein belongs to the triosephosphate isomerase family. In terms of assembly, homodimer.

It is found in the cytoplasm. The enzyme catalyses D-glyceraldehyde 3-phosphate = dihydroxyacetone phosphate. Its pathway is carbohydrate biosynthesis; gluconeogenesis. The protein operates within carbohydrate degradation; glycolysis; D-glyceraldehyde 3-phosphate from glycerone phosphate: step 1/1. Involved in the gluconeogenesis. Catalyzes stereospecifically the conversion of dihydroxyacetone phosphate (DHAP) to D-glyceraldehyde-3-phosphate (G3P). This is Triosephosphate isomerase from Flavobacterium psychrophilum (strain ATCC 49511 / DSM 21280 / CIP 103535 / JIP02/86).